Here is a 369-residue protein sequence, read N- to C-terminus: Fructose-bisphosphate aldolase (369 aa).

Asp-40 is a dihydroxyacetone phosphate binding site. D-glyceraldehyde 3-phosphate is bound by residues Ser-42 and Thr-45. Position 49 (Arg-49) interacts with beta-D-fructose 1,6-bisphosphate. Lys-113 is a D-glyceraldehyde 3-phosphate binding site. Lys-152 lines the dihydroxyacetone phosphate pocket. Glu-195 contributes to the D-glyceraldehyde 3-phosphate binding site. The active-site Proton acceptor is the Glu-195. Dihydroxyacetone phosphate contacts are provided by Lys-237, Ser-279, and Gly-280. The active-site Schiff-base intermediate with dihydroxyacetone phosphate is Lys-237. Residues 279–281 and Ser-307 each bind beta-D-fructose 1,6-bisphosphate; that span reads SGG. Gly-309 and Arg-310 together coordinate dihydroxyacetone phosphate. Position 310 (Arg-310) interacts with beta-D-fructose 1,6-bisphosphate.

It belongs to the class I fructose-bisphosphate aldolase family. In terms of assembly, homotetramer. Interacts with TRAP (via cytoplasmic domain); the interaction prevents substrate binding and thereby inhibits aldolase activity. Interacts with MTRAP (via cytoplasmic domain); MTRAP phosphorylation may increase the binding to FBPA. Interact with RH1 (via cytoplasmic domain). Interacts with RH2b (via cytoplasmic domain). Interacts with RH4 (via cytoplasmic domain). Interacts with AMA1 (via cytoplasmic domain); the interaction is weak, however it may be increased upon AMA1 phosphorylation. Interacts with EBA140 (via cytoplasmic domain); the interaction is weak. Interacts with EBA175 (via cytoplasmic domain); the interaction is weak. Interacts with EBA181 (via cytoplasmic domain); the interaction is weak. Interacts with G-actin and F-actin. May interact with ACT2/actin II; the interaction inhibits FBPA catalytic activity. Interacts with human SLC4A1/band 3 (via N-terminus); the interaction inhibits FBPA catalytic activity.

It is found in the cytoplasm. The protein resides in the membrane. It localises to the host cell membrane. It catalyses the reaction beta-D-fructose 1,6-bisphosphate = D-glyceraldehyde 3-phosphate + dihydroxyacetone phosphate. Its pathway is carbohydrate degradation; glycolysis; D-glyceraldehyde 3-phosphate and glycerone phosphate from D-glucose: step 4/4. The cytoplasmic tail of TRAP and probably other adhesins acts as a competitive inhibitor as the binding sites of the glycolytic substrate fructose 1,6-bisphosphate and TRAP partially overlap. In terms of biological role, plays a key role in glycolysis by catalyzing the cleavage of fructose 1,6-bisphosphate into dihydroxyacetone phosphate and glyceraldehyde 3-phosphate. Independently of its catalytic activity, connects the actin filaments, and thus the actomyosin motor, to cell surface adhesins of the thrombospondin-related anonymous protein (TRAP), the erythrocyte binding ligand (EBL) and reticulocyte binding homolog (RH) protein families; this interaction is probably involved in transducing the motor force across the parasite surface required for sporozoite and ookinete gliding motility and merozoite invasion. Stimulates actin polymerisation. This chain is Fructose-bisphosphate aldolase, found in Plasmodium falciparum (isolate 3D7).